The chain runs to 508 residues: Hydroxymethylglutaryl-CoA synthase, mitochondrial (508 aa).

Residues methionine 1 to serine 37 constitute a mitochondrion transit peptide. N6-succinyllysine is present on lysine 52. Glutamate 80 and alanine 81 together coordinate (3S)-3-hydroxy-3-methylglutaryl-CoA. N6-acetyllysine; alternate occurs at positions 83 and 118. N6-succinyllysine; alternate occurs at positions 83 and 118. Catalysis depends on glutamate 132, which acts as the Proton donor/acceptor. Positions 166, 204, and 208 each coordinate (3S)-3-hydroxy-3-methylglutaryl-CoA. Cysteine 166 serves as the catalytic Acyl-thioester intermediate. The residue at position 221 (lysine 221) is an N6-succinyllysine. Lysine 243 carries the post-translational modification N6-acetyllysine. Lysine 256 carries the N6-acetyllysine; alternate modification. Lysine 256 is modified (N6-succinyllysine; alternate). Serine 258 and histidine 301 together coordinate (3S)-3-hydroxy-3-methylglutaryl-CoA. Histidine 301 functions as the Proton donor/acceptor in the catalytic mechanism. Residue lysine 306 is modified to N6-acetyllysine. A (3S)-3-hydroxy-3-methylglutaryl-CoA-binding site is contributed by lysine 310. N6-acetyllysine; alternate is present on residues lysine 310 and lysine 327. Residues lysine 310 and lysine 327 each carry the N6-succinyllysine; alternate modification. Position 333 is an N6-succinyllysine (lysine 333). An N6-acetyllysine; alternate mark is found at lysine 342, lysine 350, lysine 354, and lysine 358. N6-succinyllysine; alternate occurs at positions 342, 350, 354, and 358. Positions 380 and 414 each coordinate (3S)-3-hydroxy-3-methylglutaryl-CoA. Position 427 is an N6-acetyllysine (lysine 427). Serine 433 is subject to Phosphoserine. Lysine 437 carries the post-translational modification N6-acetyllysine. A Phosphoserine modification is found at serine 440. Lysine 447 carries the post-translational modification N6-acetyllysine; alternate. Lysine 447 is modified (N6-succinyllysine; alternate). Serine 456 bears the Phosphoserine mark. Residue lysine 473 is modified to N6-acetyllysine; alternate. Lysine 473 carries the N6-succinyllysine; alternate modification. Serine 477 carries the post-translational modification Phosphoserine.

This sequence belongs to the thiolase-like superfamily. HMG-CoA synthase family. Homodimer. Post-translationally, succinylated. Desuccinylated by SIRT5. Succinylation, at least at Lys-83 and Lys-310, inhibits the enzymatic activity. In terms of tissue distribution, liver and kidney.

Its subcellular location is the mitochondrion. It carries out the reaction acetoacetyl-CoA + acetyl-CoA + H2O = (3S)-3-hydroxy-3-methylglutaryl-CoA + CoA + H(+). It functions in the pathway metabolic intermediate biosynthesis; (R)-mevalonate biosynthesis; (R)-mevalonate from acetyl-CoA: step 2/3. Catalyzes the first irreversible step in ketogenesis, condensing acetyl-CoA to acetoacetyl-CoA to form HMG-CoA, which is converted by HMG-CoA reductase (HMGCR) into mevalonate. In Rattus norvegicus (Rat), this protein is Hydroxymethylglutaryl-CoA synthase, mitochondrial (Hmgcs2).